A 452-amino-acid polypeptide reads, in one-letter code: Bifunctional protein GlmU (452 aa).

The interval 1–233 is pyrophosphorylase; that stretch reads MTDRPFAALI…AWEVAGVNSR (233 aa). Residues 11–14, Lys25, Gln76, 81–82, 104–106, Gly144, Glu159, Asn174, and Asn231 contribute to the UDP-N-acetyl-alpha-D-glucosamine site; these read LAAG, GT, and YGD. Mg(2+) is bound at residue Asp106. Asn231 contributes to the Mg(2+) binding site. A linker region spans residues 234–254; that stretch reads AELAAVEAEWQRRRRLAAMAD. The interval 255–452 is N-acetyltransferase; that stretch reads GATLIAPETV…AMKIKKAARK (198 aa). UDP-N-acetyl-alpha-D-glucosamine contacts are provided by Arg320 and Lys338. The active-site Proton acceptor is the His350. UDP-N-acetyl-alpha-D-glucosamine-binding residues include Tyr353 and Asn364. Residues Ala367, 373 to 374, Ser392, Ala410, and Arg427 each bind acetyl-CoA; that span reads NY.

It in the N-terminal section; belongs to the N-acetylglucosamine-1-phosphate uridyltransferase family. In the C-terminal section; belongs to the transferase hexapeptide repeat family. As to quaternary structure, homotrimer. Mg(2+) serves as cofactor.

It localises to the cytoplasm. It catalyses the reaction alpha-D-glucosamine 1-phosphate + acetyl-CoA = N-acetyl-alpha-D-glucosamine 1-phosphate + CoA + H(+). The catalysed reaction is N-acetyl-alpha-D-glucosamine 1-phosphate + UTP + H(+) = UDP-N-acetyl-alpha-D-glucosamine + diphosphate. Its pathway is nucleotide-sugar biosynthesis; UDP-N-acetyl-alpha-D-glucosamine biosynthesis; N-acetyl-alpha-D-glucosamine 1-phosphate from alpha-D-glucosamine 6-phosphate (route II): step 2/2. It participates in nucleotide-sugar biosynthesis; UDP-N-acetyl-alpha-D-glucosamine biosynthesis; UDP-N-acetyl-alpha-D-glucosamine from N-acetyl-alpha-D-glucosamine 1-phosphate: step 1/1. The protein operates within bacterial outer membrane biogenesis; LPS lipid A biosynthesis. Functionally, catalyzes the last two sequential reactions in the de novo biosynthetic pathway for UDP-N-acetylglucosamine (UDP-GlcNAc). The C-terminal domain catalyzes the transfer of acetyl group from acetyl coenzyme A to glucosamine-1-phosphate (GlcN-1-P) to produce N-acetylglucosamine-1-phosphate (GlcNAc-1-P), which is converted into UDP-GlcNAc by the transfer of uridine 5-monophosphate (from uridine 5-triphosphate), a reaction catalyzed by the N-terminal domain. This is Bifunctional protein GlmU from Rhizorhabdus wittichii (strain DSM 6014 / CCUG 31198 / JCM 15750 / NBRC 105917 / EY 4224 / RW1) (Sphingomonas wittichii).